The primary structure comprises 959 residues: DNA polymerase 1 (959 aa).

The segment at 1–110 is disordered; sequence MRVRGGQEAA…LTLEPSPQSE (110 aa). Positions 44-60 are enriched in basic and acidic residues; sequence KKPEPPPTLHREREPES.

It belongs to the DNA polymerase type-B family.

The catalysed reaction is DNA(n) + a 2'-deoxyribonucleoside 5'-triphosphate = DNA(n+1) + diphosphate. This is DNA polymerase 1 (polA) from Aeropyrum pernix (strain ATCC 700893 / DSM 11879 / JCM 9820 / NBRC 100138 / K1).